The primary structure comprises 309 residues: ADP-L-glycero-D-manno-heptose-6-epimerase (309 aa).

NADP(+) contacts are provided by residues 10 to 11 (MI), 31 to 32 (DN), Lys-38, Lys-53, 75 to 79 (EGACS), and Asn-92. The active-site Proton acceptor is the Tyr-139. Position 143 (Lys-143) interacts with NADP(+). Asn-168 provides a ligand contact to substrate. NADP(+) is bound by residues Val-169 and Lys-177. The Proton acceptor role is filled by Lys-177. Substrate-binding positions include Ser-179, His-186, 200–203 (FDGS), Arg-208, and Tyr-271.

The protein belongs to the NAD(P)-dependent epimerase/dehydratase family. HldD subfamily. Homopentamer. NADP(+) serves as cofactor.

It carries out the reaction ADP-D-glycero-beta-D-manno-heptose = ADP-L-glycero-beta-D-manno-heptose. Its pathway is nucleotide-sugar biosynthesis; ADP-L-glycero-beta-D-manno-heptose biosynthesis; ADP-L-glycero-beta-D-manno-heptose from D-glycero-beta-D-manno-heptose 7-phosphate: step 4/4. In terms of biological role, catalyzes the interconversion between ADP-D-glycero-beta-D-manno-heptose and ADP-L-glycero-beta-D-manno-heptose via an epimerization at carbon 6 of the heptose. The sequence is that of ADP-L-glycero-D-manno-heptose-6-epimerase from Serratia proteamaculans (strain 568).